A 134-amino-acid chain; its full sequence is DNA-binding protein H-NS (134 aa).

Residues 111-116 mediate DNA binding; the sequence is QGRTLA.

This sequence belongs to the histone-like protein H-NS family. As to quaternary structure, homodimer that oligomerizes on DNA into higher-order complexes that form bridges between disparate regions of DNA compacting it. Interacts with YmoA and other similar proteins.

It is found in the cytoplasm. The protein resides in the nucleoid. In terms of biological role, a DNA-binding protein implicated in transcriptional repression and chromosome organization and compaction. Binds nucleation sites in AT-rich DNA and bridges them, forming higher-order nucleoprotein complexes and condensing the chromosome. As many horizontally transferred genes are AT-rich, it plays a central role in silencing foreign genes. A subset of genes are repressed by H-NS in association with other proteins. The polypeptide is DNA-binding protein H-NS (hns) (Proteus vulgaris).